A 101-amino-acid polypeptide reads, in one-letter code: NAD(P)H-quinone oxidoreductase subunit 4L, chloroplastic (101 aa).

3 consecutive transmembrane segments (helical) span residues 2-22 (ILEH…YGLI), 32-52 (MCLE…SDFF), and 61-81 (IFSI…LAIV).

Belongs to the complex I subunit 4L family. NDH is composed of at least 16 different subunits, 5 of which are encoded in the nucleus.

The protein localises to the plastid. It localises to the chloroplast thylakoid membrane. It catalyses the reaction a plastoquinone + NADH + (n+1) H(+)(in) = a plastoquinol + NAD(+) + n H(+)(out). The enzyme catalyses a plastoquinone + NADPH + (n+1) H(+)(in) = a plastoquinol + NADP(+) + n H(+)(out). Its function is as follows. NDH shuttles electrons from NAD(P)H:plastoquinone, via FMN and iron-sulfur (Fe-S) centers, to quinones in the photosynthetic chain and possibly in a chloroplast respiratory chain. The immediate electron acceptor for the enzyme in this species is believed to be plastoquinone. Couples the redox reaction to proton translocation, and thus conserves the redox energy in a proton gradient. The sequence is that of NAD(P)H-quinone oxidoreductase subunit 4L, chloroplastic from Oenothera argillicola (Appalachian evening primrose).